The following is a 486-amino-acid chain: MATALPRTLGELQLYRILQKANLLSYFDAFIQQGGDDVQQLCEAGEEEFLEIMALVGMASKPLHVRRLQKALRDWVTNPGLFNQPLTSLPVSSIPIYKLPEGSPTWLGISCNSYERSSSSREPHLKIPKCAATTCVQSLGQGKSEVGSLALQSVSDSRLWQGHHATESEHSLSPADLGSPASPKESSEALDAAAALSVAECVERMAPTLPKSDLSEVKELLKNNKKLAKMIGHIFEMSDEDPHKEEEIRKYSAIYGRFDSKRKDGKHLTLHELTVNEAAAQLCVKDNALLTRRDELFALARQVSREVTYKYTYRTTRLKCGERDELSPKRIKIEDGFPDFQESVPTLFQQARAKSEELAGLGSQQAEKGMAKQMELLCAQAGYERLQQERRLTAGLYRQSSGEQSPDGGLPSDSSDGQGERPLNLRIPSVQNRQPHHFVVDGELSRLYSSEAKSHSSESLGILKDYPHSAFTLEKKVIKTEPEDSR.

The interval 4–82 (ALPRTLGELQ…RDWVTNPGLF (79 aa)) is NCD1. Glycyl lysine isopeptide (Lys-Gly) (interchain with G-Cter in SUMO2) cross-links involve residues Lys-126, Lys-129, and Lys-143. Residues 160–187 (WQGHHATESEHSLSPADLGSPASPKESS) are disordered. Residues Ser-171 and Ser-182 each carry the phosphoserine modification. Residue Lys-211 forms a Glycyl lysine isopeptide (Lys-Gly) (interchain with G-Cter in SUMO2) linkage. The segment at 220 to 309 (LLKNNKKLAK…ARQVSREVTY (90 aa)) is NCD2. Residues 306–337 (EVTYKYTYRTTRLKCGERDELSPKRIKIEDGF) form a necessary for nuclear localization region. Residue Ser-327 is modified to Phosphoserine. Lys-332 is covalently cross-linked (Glycyl lysine isopeptide (Lys-Gly) (interchain with G-Cter in SUMO1); alternate). Lys-332 participates in a covalent cross-link: Glycyl lysine isopeptide (Lys-Gly) (interchain with G-Cter in SUMO2); alternate. Residues Lys-354, Lys-368, and Lys-372 each participate in a glycyl lysine isopeptide (Lys-Gly) (interchain with G-Cter in SUMO2) cross-link. The interval 398–438 (RQSSGEQSPDGGLPSDSSDGQGERPLNLRIPSVQNRQPHHF) is disordered. The segment covering 404 to 417 (QSPDGGLPSDSSDG) has biased composition (low complexity). Residue Ser-405 is modified to Phosphoserine. Glycyl lysine isopeptide (Lys-Gly) (interchain with G-Cter in SUMO2) cross-links involve residues Lys-453, Lys-464, and Lys-476. Lys-479 participates in a covalent cross-link: Glycyl lysine isopeptide (Lys-Gly) (interchain with G-Cter in SUMO1); alternate. Residue Lys-479 forms a Glycyl lysine isopeptide (Lys-Gly) (interchain with G-Cter in SUMO2); alternate linkage.

Belongs to the NAB family. As to quaternary structure, homomultimers may associate with EGR1 bound to DNA. Widely expressed in adult. In day 16 embryo highest levels in forebrain, thymus, salivary gland and cartilage.

It localises to the nucleus. In terms of biological role, acts as a transcriptional repressor for zinc finger transcription factors EGR1 and EGR2. In Mus musculus (Mouse), this protein is NGFI-A-binding protein 1 (Nab1).